We begin with the raw amino-acid sequence, 303 residues long: Glycine--tRNA ligase alpha subunit (303 aa).

The protein belongs to the class-II aminoacyl-tRNA synthetase family. In terms of assembly, tetramer of two alpha and two beta subunits.

The protein localises to the cytoplasm. It carries out the reaction tRNA(Gly) + glycine + ATP = glycyl-tRNA(Gly) + AMP + diphosphate. This is Glycine--tRNA ligase alpha subunit from Methylobacterium radiotolerans (strain ATCC 27329 / DSM 1819 / JCM 2831 / NBRC 15690 / NCIMB 10815 / 0-1).